The primary structure comprises 312 residues: Glyoxylate/hydroxypyruvate reductase A (312 aa).

R227 is a catalytic residue. The active-site Proton donor is H275.

This sequence belongs to the D-isomer specific 2-hydroxyacid dehydrogenase family. GhrA subfamily.

It localises to the cytoplasm. The catalysed reaction is glycolate + NADP(+) = glyoxylate + NADPH + H(+). It catalyses the reaction (R)-glycerate + NAD(+) = 3-hydroxypyruvate + NADH + H(+). It carries out the reaction (R)-glycerate + NADP(+) = 3-hydroxypyruvate + NADPH + H(+). Catalyzes the NADPH-dependent reduction of glyoxylate and hydroxypyruvate into glycolate and glycerate, respectively. This Escherichia coli O17:K52:H18 (strain UMN026 / ExPEC) protein is Glyoxylate/hydroxypyruvate reductase A.